A 183-amino-acid chain; its full sequence is ATP-dependent protease subunit HslV (183 aa).

Thr7 is a catalytic residue. Positions 162, 165, and 168 each coordinate Na(+).

It belongs to the peptidase T1B family. HslV subfamily. In terms of assembly, a double ring-shaped homohexamer of HslV is capped on each side by a ring-shaped HslU homohexamer. The assembly of the HslU/HslV complex is dependent on binding of ATP.

It is found in the cytoplasm. The catalysed reaction is ATP-dependent cleavage of peptide bonds with broad specificity.. Allosterically activated by HslU binding. Protease subunit of a proteasome-like degradation complex believed to be a general protein degrading machinery. The polypeptide is ATP-dependent protease subunit HslV (Alkalilimnicola ehrlichii (strain ATCC BAA-1101 / DSM 17681 / MLHE-1)).